Consider the following 213-residue polypeptide: Uridine kinase (213 aa).

13–20 (GGSCSGKT) provides a ligand contact to ATP.

The protein belongs to the uridine kinase family.

Its subcellular location is the cytoplasm. The enzyme catalyses uridine + ATP = UMP + ADP + H(+). It catalyses the reaction cytidine + ATP = CMP + ADP + H(+). Its pathway is pyrimidine metabolism; CTP biosynthesis via salvage pathway; CTP from cytidine: step 1/3. It functions in the pathway pyrimidine metabolism; UMP biosynthesis via salvage pathway; UMP from uridine: step 1/1. The chain is Uridine kinase (udk) from Mycoplasma pneumoniae (strain ATCC 29342 / M129 / Subtype 1) (Mycoplasmoides pneumoniae).